The primary structure comprises 511 residues: 4,4'-diapophytoene desaturase (4,4'-diapolycopene-forming) (511 aa).

It belongs to the carotenoid/retinoid oxidoreductase family.

It carries out the reaction 15-cis-4,4'-diapophytoene + 4 FAD + 4 H(+) = all-trans-4,4'-diapolycopene + 4 FADH2. The protein operates within carotenoid biosynthesis. Its function is as follows. Involved in the biosynthesis of C30 carotenoids. Catalyzes four successive dehydrogenation reactions that lead to the introduction of four double bonds into 4,4'-diapophytoene (dehydrosqualene) to yield 4,4'-diapolycopene. The sequence is that of 4,4'-diapophytoene desaturase (4,4'-diapolycopene-forming) from Methylomonas sp.